We begin with the raw amino-acid sequence, 334 residues long: Cytochrome c biogenesis protein CcsA (334 aa).

Transmembrane regions (helical) follow at residues 12-32, 35-55, 67-87, 96-116, 141-161, 242-262, 277-297, and 303-323; these read NTAF…VVFP, WLVQ…TALL, ISNL…VHFI, FVGA…ALTL, VMMV…AFLF, IIGL…VWAN, WALI…TKGW, and AILA…VNLL.

It belongs to the CcmF/CycK/Ccl1/NrfE/CcsA family. In terms of assembly, may interact with ccs1.

The protein resides in the cellular thylakoid membrane. Required during biogenesis of c-type cytochromes (cytochrome c6 and cytochrome f) at the step of heme attachment. This Synechocystis sp. (strain ATCC 27184 / PCC 6803 / Kazusa) protein is Cytochrome c biogenesis protein CcsA.